The primary structure comprises 214 residues: Late embryogenesis abundant protein At1g64065 (214 aa).

Residues 41–61 (VYSLTIIVIIFALCLILSSIF) form a helical membrane-spanning segment.

It belongs to the LEA type 2 family.

Its subcellular location is the membrane. The sequence is that of Late embryogenesis abundant protein At1g64065 from Arabidopsis thaliana (Mouse-ear cress).